We begin with the raw amino-acid sequence, 258 residues long: Imidazole glycerol phosphate synthase subunit HisF (258 aa).

Active-site residues include D12 and D131.

The protein belongs to the HisA/HisF family. In terms of assembly, heterodimer of HisH and HisF.

Its subcellular location is the cytoplasm. The catalysed reaction is 5-[(5-phospho-1-deoxy-D-ribulos-1-ylimino)methylamino]-1-(5-phospho-beta-D-ribosyl)imidazole-4-carboxamide + L-glutamine = D-erythro-1-(imidazol-4-yl)glycerol 3-phosphate + 5-amino-1-(5-phospho-beta-D-ribosyl)imidazole-4-carboxamide + L-glutamate + H(+). The protein operates within amino-acid biosynthesis; L-histidine biosynthesis; L-histidine from 5-phospho-alpha-D-ribose 1-diphosphate: step 5/9. Its function is as follows. IGPS catalyzes the conversion of PRFAR and glutamine to IGP, AICAR and glutamate. The HisF subunit catalyzes the cyclization activity that produces IGP and AICAR from PRFAR using the ammonia provided by the HisH subunit. The chain is Imidazole glycerol phosphate synthase subunit HisF from Corynebacterium glutamicum (strain R).